Reading from the N-terminus, the 364-residue chain is Eukaryotic translation initiation factor 3 subunit H (364 aa).

Positions 13–162 (VQVDALVAIK…LRAYRLSPSF (150 aa)) constitute an MPN domain.

The protein belongs to the eIF-3 subunit H family. In terms of assembly, component of the eukaryotic translation initiation factor 3 (eIF-3) complex.

The protein localises to the cytoplasm. Functionally, component of the eukaryotic translation initiation factor 3 (eIF-3) complex, which is involved in protein synthesis of a specialized repertoire of mRNAs and, together with other initiation factors, stimulates binding of mRNA and methionyl-tRNAi to the 40S ribosome. The eIF-3 complex specifically targets and initiates translation of a subset of mRNAs involved in cell proliferation. This chain is Eukaryotic translation initiation factor 3 subunit H, found in Phaeosphaeria nodorum (strain SN15 / ATCC MYA-4574 / FGSC 10173) (Glume blotch fungus).